A 538-amino-acid chain; its full sequence is uncharacterized protein (538 aa).

A signal peptide spans 1-17 (MSFSATILFSPPSGSEA). The segment at 101-131 (RQGKVSIPDEDGESRAHSSPPEEPGPLKESP) is disordered. Glycyl lysine isopeptide (Lys-Gly) (interchain with G-Cter in SUMO2) cross-links involve residues lysine 128 and lysine 221. Serine 224 is subject to Phosphoserine. The tract at residues 233–253 (RATPETGPENGTKLPPPRPED) is disordered. Residues serine 285 and serine 428 each carry the phosphoserine modification. Positions 488–523 (LPPELYNPNFQEEEDEGGDENAPGSPSFDQPHKTCC) are disordered.

It is found in the secreted. This is an uncharacterized protein from Homo sapiens (Human).